A 489-amino-acid polypeptide reads, in one-letter code: Mitochondrial-processing peptidase subunit beta (489 aa).

Residues 1–45 (MAAAAVSRTLLPVAGRRLWGFTRRLPLRAAAAQPLYFGGDRLRST) constitute a mitochondrion transit peptide. Residue His101 coordinates Zn(2+). The active-site Proton acceptor is the Glu104. Residues His105 and Glu181 each contribute to the Zn(2+) site.

Belongs to the peptidase M16 family. In terms of assembly, heterodimer of PMPCA (alpha) and PMPCB (beta) subunits, forming the mitochondrial processing protease (MPP) in which PMPCA is involved in substrate recognition and binding and PMPCB is the catalytic subunit. Zn(2+) is required as a cofactor.

The protein localises to the mitochondrion matrix. It catalyses the reaction Release of N-terminal transit peptides from precursor proteins imported into the mitochondrion, typically with Arg in position P2.. Binding to PMPCA is required for catalytic activity. In terms of biological role, catalytic subunit of the essential mitochondrial processing protease (MPP), which cleaves the mitochondrial sequence off newly imported precursors proteins. Preferentially, cleaves after an arginine at position P2. Required for PINK1 turnover by coupling PINK1 mitochondrial import and cleavage, which results in subsequent PINK1 proteolysis. This is Mitochondrial-processing peptidase subunit beta (Pmpcb) from Rattus norvegicus (Rat).